We begin with the raw amino-acid sequence, 229 residues long: 23 kDa piroplasm membrane protein (229 aa).

An N-terminal signal peptide occupies residues 1 to 19 (MNKYFKVFFFVLLTHALKS). Residues 20 to 203 (ALIFGQATLQ…EKEDTNKKKY (184 aa)) are Extracellular-facing. The chain crosses the membrane as a helical span at residues 204 to 224 (VLMVVVVVVFVVVASLVVFLV). The Cytoplasmic portion of the chain corresponds to 225-229 (KFCLK).

Its subcellular location is the membrane. The polypeptide is 23 kDa piroplasm membrane protein (Theileria parva (East coast fever infection agent)).